Reading from the N-terminus, the 459-residue chain is Mycothione reductase (459 aa).

Residue 31–39 (EQGTFGGTC) participates in FAD binding. Cysteines 39 and 44 form a disulfide. His444 serves as the catalytic Proton acceptor.

Belongs to the class-I pyridine nucleotide-disulfide oxidoreductase family. Homodimer. The cofactor is FAD.

It catalyses the reaction 2 mycothiol + NADP(+) = mycothione + NADPH + H(+). It carries out the reaction 2 mycothiol + NAD(+) = mycothione + NADH + H(+). Catalyzes the NAD(P)H-dependent reduction of mycothione (the oxidized disulfide form of mycothiol) to mycothiol. This is Mycothione reductase (mtr) from Mycobacterium tuberculosis (strain CDC 1551 / Oshkosh).